We begin with the raw amino-acid sequence, 281 residues long: MDPPLVNDSSFSAANPSSYTLSEIWPFPVNDAVRSGLRLAVNSGRVFTRSEHSGNKDVSAAEESTVTDLTAGWGSRKTRDLNSEDDSSKMVSSSSSGNELKESGDKKRKLCGSESGNGDGSMRPEGETSSGGGGSKATEQKNKPEPPKDYIHVRARRGQATDRHSLAERARREKISEKMTALQDIIPGCNKIIGKALVLDEIINYIQSLQRQVEFLSMKLEVVNSGASTGPTIGVFPSGDLGTLPIDVHRTIYEQQEANETRVSQPEWLHMQVDGNFNRTT.

Positions 47–167 (FTRSEHSGNK…GQATDRHSLA (121 aa)) are disordered. 2 stretches are compositionally biased toward basic and acidic residues: residues 77 to 88 (KTRDLNSEDDSS) and 138 to 152 (TEQK…DYIH). The 51-residue stretch at 159–209 (QATDRHSLAERARREKISEKMTALQDIIPGCNKIIGKALVLDEIINYIQSL) folds into the bHLH domain.

In terms of assembly, homodimer.

The protein resides in the nucleus. This Arabidopsis thaliana (Mouse-ear cress) protein is Transcription factor bHLH79 (BHLH79).